Here is a 236-residue protein sequence, read N- to C-terminus: Small ribosomal subunit protein uS3 (236 aa).

The KH type-2 domain occupies 39 to 112; the sequence is IREFITKHPK…RINLKVEEVG (74 aa). The disordered stretch occupies residues 212–236; sequence YGDDNDGADAQTGQASKKPKRSYKR.

The protein belongs to the universal ribosomal protein uS3 family. As to quaternary structure, part of the 30S ribosomal subunit. Forms a tight complex with proteins S10 and S14.

Functionally, binds the lower part of the 30S subunit head. Binds mRNA in the 70S ribosome, positioning it for translation. The sequence is that of Small ribosomal subunit protein uS3 from Rhodopirellula baltica (strain DSM 10527 / NCIMB 13988 / SH1).